The sequence spans 349 residues: NADH-quinone oxidoreductase subunit H (349 aa).

8 helical membrane passes run 11-31 (FPLLIIVGKTLLLLVILLLLV), 83-103 (GVFLLAPFVSATLALSTWAVI), 116-136 (VGLLYILAISSLEVYGVIMGG), 162-182 (IGFVLVTVILVSGSLDLTTIV), 200-220 (FLDWNWLVLFPMFIIFFISAL), 252-272 (LFFLGEYVAIVLMCALTTILF), 288-308 (VPGIIWFVLKVCFVFFWFAMV), and 323-343 (LGWKVFLPLSLAMVVITAAFL).

It belongs to the complex I subunit 1 family. As to quaternary structure, NDH-1 is composed of 14 different subunits. Subunits NuoA, H, J, K, L, M, N constitute the membrane sector of the complex.

Its subcellular location is the cell inner membrane. The catalysed reaction is a quinone + NADH + 5 H(+)(in) = a quinol + NAD(+) + 4 H(+)(out). NDH-1 shuttles electrons from NADH, via FMN and iron-sulfur (Fe-S) centers, to quinones in the respiratory chain. The immediate electron acceptor for the enzyme in this species is believed to be ubiquinone. Couples the redox reaction to proton translocation (for every two electrons transferred, four hydrogen ions are translocated across the cytoplasmic membrane), and thus conserves the redox energy in a proton gradient. This subunit may bind ubiquinone. The protein is NADH-quinone oxidoreductase subunit H of Bartonella henselae (strain ATCC 49882 / DSM 28221 / CCUG 30454 / Houston 1) (Rochalimaea henselae).